A 196-amino-acid chain; its full sequence is SAGA-associated factor 11 homolog (196 aa).

Residues 1–22 form a disordered region; the sequence is MSAANMPTTTGAQGSGNQVPTT. Residues 106–127 form an SGF11-type zinc finger; it reads CTCPNCDRLVAAARFAPHLEKC. The segment at 144–196 is disordered; that stretch reads TKEGATSAHLHSAGNTGGTDDEDDVDWSSDKRRKKSNQNSRNNGSKKNNGKSF. Ser172 is subject to Phosphoserine. Residues 180–196 are compositionally biased toward low complexity; the sequence is NQNSRNNGSKKNNGKSF.

Belongs to the SGF11 family. As to quaternary structure, component of some SAGA transcription coactivator-HAT complexes, at least composed of Ada2b, not/nonstop, Pcaf/Gcn5, Sgf11 and Spt3. Within the SAGA complex, Sgf11, e(y)2, and not/nonstop form an additional subcomplex of SAGA called the DUB module (deubiquitination module). Interacts directly with not/nonstop. Interacts with the AMEX complex component xmas-2. Interacts with Cbp80; important for promoter recruitment of Sgf11 that is not associated with the DUB module.

It localises to the nucleus. Its subcellular location is the nucleoplasm. The protein localises to the cytoplasm. Component of the transcription regulatory histone acetylation (HAT) complex SAGA, a multiprotein complex that activates transcription by remodeling chromatin and mediating histone acetylation and deubiquitination. Within the SAGA complex, participates in a subcomplex that specifically deubiquitinates histone H2B. The SAGA complex is recruited to specific gene promoters by activators, where it is required for transcription. Required for nuclear receptor-mediated transactivation. Binds independently on SAGA to promoters in an RNA-dependent manner. Binds to mRNA and is essential for total mRNA export from the nucleus. Required to counteract heterochromatin silencing. Controls the development of neuronal connectivity in visual system by being required for accurate axon targeting in the optic lobe. Required for expression of ecdysone-induced genes such as br/broad. The chain is SAGA-associated factor 11 homolog from Drosophila erecta (Fruit fly).